A 425-amino-acid polypeptide reads, in one-letter code: UDP-N-acetyl-D-glucosamine 6-dehydrogenase (425 aa).

Residues Val-17, Asp-35, Arg-40, Thr-86, and Thr-121 each coordinate NAD(+). The active-site Nucleophile is Cys-261. Residue Arg-332 coordinates NAD(+).

This sequence belongs to the UDP-glucose/GDP-mannose dehydrogenase family. Homotrimer.

It carries out the reaction UDP-N-acetyl-alpha-D-glucosamine + 2 NAD(+) + H2O = UDP-2-acetamido-2-deoxy-alpha-D-glucuronate + 2 NADH + 3 H(+). It functions in the pathway capsule biogenesis; capsule polysaccharide biosynthesis. The protein operates within glycan metabolism; Vi-antigen biosynthesis. Functionally, dehydrogenase required for the biosynthesis of the capsular polysaccharide, commonly referred as the Vi antigen, an important virulence factor. Catalyzes the conversion of UDP-N-acetylglucosamine (UDP-GlcNAc) to UDP-N-acetylglucosaminuronic acid (UDP-GlcNAcA). Cannot use UDP-GalNAc, UDP-Glc and UDP-Gal as substrates. This is UDP-N-acetyl-D-glucosamine 6-dehydrogenase from Salmonella typhi.